Here is a 246-residue protein sequence, read N- to C-terminus: Dof zinc finger protein DOF4.7 (246 aa).

2 stretches are compositionally biased toward polar residues: residues 1-12 (MMTSSHQSNTTG) and 27-37 (QINNKEPSPAT). Positions 1–39 (MMTSSHQSNTTGFKPRRIKTTAKPPRQINNKEPSPATQP) are disordered. Residues 41 to 95 (LKCPRCDSVNTKFCYYNNYSLSQPRHYCKNCRRYWTRGGALRNVPIGGSTRNKNK) form a Dof-type zinc finger. Positions 43, 46, 68, and 71 each coordinate Zn(2+). The tract at residues 216 to 235 (GGATSGNHEDNDDGEGNLGN) is disordered.

As to quaternary structure, interacts with ZFP2. Highly expressed at the base of all organs of the flower, especially in the abscission zone (AZ) of petals, stamens and sepals. Expressed at low levels in sepals, filaments, stigmatic papillae, tips of young siliques, and at the base of pedicels and leaf trichomes.

The protein resides in the nucleus. Functionally, transcription factor that binds specifically to a 5'-AA[AG]G-3' consensus core sequence. Involved in the negative regulation of floral organ abscission by binding to the typical DOF 5'-AAAG-3' sequences in the promoter of ADPG2/PGAZAT, and by down-regulating its expression. ADPG2/PGAZAT is an abscission-related and cell wall hydrolyzing polygalacturonase. May act through the interaction with ZFP2, an abscission-related transcription factor. This chain is Dof zinc finger protein DOF4.7, found in Arabidopsis thaliana (Mouse-ear cress).